An 87-amino-acid chain; its full sequence is Small ribosomal subunit protein bS20 (87 aa).

Positions 1–11 are enriched in basic residues; that stretch reads MANIKSAKKRA. The interval 1–27 is disordered; the sequence is MANIKSAKKRAVQSEKRRQHNASQRSM.

Belongs to the bacterial ribosomal protein bS20 family.

Its function is as follows. Binds directly to 16S ribosomal RNA. In Histophilus somni (strain 129Pt) (Haemophilus somnus), this protein is Small ribosomal subunit protein bS20.